The chain runs to 1764 residues: Nucleolar pre-ribosomal-associated protein 1 (1764 aa).

A disordered region spans residues 1–23 (MSNHSEAYGSRDQRREKYTQGKE). Residues 9-23 (GSRDQRREKYTQGKE) are compositionally biased toward basic and acidic residues.

As to quaternary structure, associates with pre-60S ribosomal particles. Predominantly associated with the 27SA2 pre-rRNA. Can associate with a subset of box H/ACA and box C/D small nucleolar RNPs (snoRNPs) required for peptidyl transferase center modification and with small RNAs snR37 and snR42. Interacts with URB2. Together with DBP6, NOP8, URB2 and RSA3, forms an RNA-independent complex, which is required during early maturation of nascent 60S ribosomal subunits.

The protein localises to the nucleus. The protein resides in the nucleolus. In terms of biological role, required for 60S ribosomal subunit formation and pre-rRNA processing. Required for normal accumulation of 25S and 5.8S rRNAs. The chain is Nucleolar pre-ribosomal-associated protein 1 (URB1) from Saccharomyces cerevisiae (strain ATCC 204508 / S288c) (Baker's yeast).